The chain runs to 152 residues: Ribosome maturation factor RimP (152 aa).

The protein belongs to the RimP family.

The protein localises to the cytoplasm. Required for maturation of 30S ribosomal subunits. The protein is Ribosome maturation factor RimP of Pseudothermotoga lettingae (strain ATCC BAA-301 / DSM 14385 / NBRC 107922 / TMO) (Thermotoga lettingae).